The chain runs to 451 residues: MQNLYIKTYGCQMNEYDSERMADTLAVSHGLRLVDDPVLADVLLLNTCSIREKAEDKVFTQLGFWRPFKERRPEVVIGVGGCVASQEGERLRRRAPYVDLVFGPQTLHRLPDLLDACLAERRPQVDIAFPMLEKFDHLPQRPGRDGATAFVTIQEGCDKFCTFCVVPHTRGREYSRSMPDILREVRALVEQGVREITLLGQNVNAYRGATGLVGEGGLADLLERLARIPGLLRLRYTTSHPANLDDELIAAHGSIGILAPHLHLPVQSGSDRILRRMHRKHTVGQYLDKVDRLRAARPGIQISSDFIVGFPGETDADFAATMELIDAVRFDQSFSFKYSQRPNTPALKLKDSVPEAVKEDRLAVLQGRINGLAQGYAQALVGTQQAVLITGPSRRDAQELTGKTACNRAVNLAGSMDWVGQMLDVEITAALPNSLRGRAALVAPTSQRLAV.

The MTTase N-terminal domain maps to Gln-2–Ala-119. Residues Cys-11, Cys-48, Cys-82, Cys-157, Cys-161, and Cys-164 each coordinate [4Fe-4S] cluster. One can recognise a Radical SAM core domain in the interval Gly-143–Ala-377. A TRAM domain is found at Gln-378–Leu-441.

Belongs to the methylthiotransferase family. MiaB subfamily. In terms of assembly, monomer. [4Fe-4S] cluster serves as cofactor.

The protein resides in the cytoplasm. It catalyses the reaction N(6)-dimethylallyladenosine(37) in tRNA + (sulfur carrier)-SH + AH2 + 2 S-adenosyl-L-methionine = 2-methylsulfanyl-N(6)-dimethylallyladenosine(37) in tRNA + (sulfur carrier)-H + 5'-deoxyadenosine + L-methionine + A + S-adenosyl-L-homocysteine + 2 H(+). In terms of biological role, catalyzes the methylthiolation of N6-(dimethylallyl)adenosine (i(6)A), leading to the formation of 2-methylthio-N6-(dimethylallyl)adenosine (ms(2)i(6)A) at position 37 in tRNAs that read codons beginning with uridine. This Acidithiobacillus ferrooxidans (strain ATCC 23270 / DSM 14882 / CIP 104768 / NCIMB 8455) (Ferrobacillus ferrooxidans (strain ATCC 23270)) protein is tRNA-2-methylthio-N(6)-dimethylallyladenosine synthase.